The primary structure comprises 278 residues: Large ribosomal subunit protein uL2 (278 aa).

Positions 222–278 (GVVMNPVDHPHGGGEGRTSGGRHPVTPWGKPTKGAKTRKNKSTDKFIIRSRHERKKR) are disordered. Residues 269–278 (IRSRHERKKR) show a composition bias toward basic residues.

This sequence belongs to the universal ribosomal protein uL2 family. In terms of assembly, part of the 50S ribosomal subunit. Forms a bridge to the 30S subunit in the 70S ribosome.

In terms of biological role, one of the primary rRNA binding proteins. Required for association of the 30S and 50S subunits to form the 70S ribosome, for tRNA binding and peptide bond formation. It has been suggested to have peptidyltransferase activity; this is somewhat controversial. Makes several contacts with the 16S rRNA in the 70S ribosome. This is Large ribosomal subunit protein uL2 from Maricaulis maris (strain MCS10) (Caulobacter maris).